The chain runs to 255 residues: L-erythrulose-1-phosphate isomerase (255 aa).

His98 serves as the catalytic Electrophile. The Proton acceptor role is filled by Glu171. Residues Gly177 and Ser214 each coordinate substrate.

Belongs to the triosephosphate isomerase family. Homodimer.

The protein resides in the cytoplasm. The enzyme catalyses L-erythrulose 1-phosphate = D-erythrulose 4-phosphate. Its pathway is carbohydrate metabolism; erythritol degradation. Functionally, catalyzes the isomerization of D-erythrulose-4P to L-erythrulose-1P. This is L-erythrulose-1-phosphate isomerase from Rhizobium meliloti (strain 1021) (Ensifer meliloti).